We begin with the raw amino-acid sequence, 544 residues long: DNA mismatch repair protein MutL (544 aa).

The protein belongs to the DNA mismatch repair MutL/HexB family.

Functionally, this protein is involved in the repair of mismatches in DNA. It is required for dam-dependent methyl-directed DNA mismatch repair. May act as a 'molecular matchmaker', a protein that promotes the formation of a stable complex between two or more DNA-binding proteins in an ATP-dependent manner without itself being part of a final effector complex. The chain is DNA mismatch repair protein MutL from Thermodesulfovibrio yellowstonii (strain ATCC 51303 / DSM 11347 / YP87).